Reading from the N-terminus, the 1113-residue chain is Receptor-type guanylate cyclase gcy-18 (1113 aa).

The first 18 residues, 1–18, serve as a signal peptide directing secretion; it reads MLKTLLFILIFFNIPIIA. The Extracellular segment spans residues 19–499; sequence IEEIPDIKEN…RGQRCSYLLE (481 aa). N-linked (GlcNAc...) asparagine glycosylation is found at asparagine 72, asparagine 369, and asparagine 456. A helical membrane pass occupies residues 500–520; that stretch reads ISVGSLIILLILISVVFFFLF. Over 521-1113 the chain is Cytoplasmic; that stretch reads RYCENKQLEK…TNYIQNVEGV (593 aa). One can recognise a Protein kinase domain in the interval 543–848; that stretch reads IDEEQVKSMM…RVRLNTEMVL (306 aa). A coiled-coil region spans residues 853 to 884; it reads SLVDQMMKMMEQYANNLEKLVAERTGMLEEAN. The region spanning 918–1048 is the Guanylate cyclase domain; the sequence is TILFSDIVGF…DTVNVSSRME (131 aa). Positions 923, 924, and 967 each coordinate Mg(2+).

This sequence belongs to the adenylyl cyclase class-4/guanylyl cyclase family. As to expression, expressed specifically in AFD sensory neurons.

The protein localises to the cell membrane. It localises to the cell projection. The protein resides in the cilium. It carries out the reaction GTP = 3',5'-cyclic GMP + diphosphate. Guanylate cyclase involved in the production of the second messenger cGMP. Regulates thermotaxis responses in AFD sensory neurons. May regulate AFD neuronal activity such as calcium responses to temperature gradients. This Caenorhabditis elegans protein is Receptor-type guanylate cyclase gcy-18.